Consider the following 327-residue polypeptide: Ubiquinone biosynthesis protein COQ4, mitochondrial (327 aa).

4 residues coordinate Zn(2+): His208, Asp209, His212, and Glu224.

This sequence belongs to the COQ4 family. As to quaternary structure, component of a multi-subunit COQ enzyme complex, composed of at least COQ3, COQ4, COQ5, COQ6, COQ7 and COQ9. Requires Zn(2+) as cofactor.

It localises to the mitochondrion inner membrane. The enzyme catalyses a 4-hydroxy-3-methoxy-5-(all-trans-polyprenyl)benzoate + H(+) = a 2-methoxy-6-(all-trans-polyprenyl)phenol + CO2. The protein operates within cofactor biosynthesis; ubiquinone biosynthesis. Its function is as follows. Lyase that catalyzes the C1-decarboxylation of 4-hydroxy-3-methoxy-5-(all-trans-polyprenyl)benzoic acid into 2-methoxy-6-(all-trans-polyprenyl)phenol during ubiquinone biosynthesis. The polypeptide is Ubiquinone biosynthesis protein COQ4, mitochondrial (Lachancea thermotolerans (strain ATCC 56472 / CBS 6340 / NRRL Y-8284) (Yeast)).